We begin with the raw amino-acid sequence, 1099 residues long: Inverted formin-2 (1099 aa).

The GBD/FH3 domain occupies 1–330; sequence MSLTEGAHTK…RAVLLADDCQ (330 aa). 2 stretches are compositionally biased toward basic and acidic residues: residues 348 to 359 and 367 to 385; these read SSKEKRKTDKCT and QTDK…KKDP. 3 disordered regions span residues 348–391, 432–509, and 1000–1019; these read SSKE…SGIP, PSPP…PTPP, and AEKR…KGEN. In terms of domain architecture, FH1 spans 426–569; sequence TCSSVLPSPP…GMLPPPPPLP (144 aa). The span at 452-499 shows a compositional bias: pro residues; it reads PLPPPPPPLPGTELSPPPPGMVALSLPPPPPPLPGMGGMLPPPPPPLP. An FH2 domain is found at 621–1009; the sequence is FLKVNKPTLK…AEKRKQQIAD (389 aa). A coiled-coil region spans residues 907 to 1019; sequence LKKLRDLQNK…EETKRQKGEN (113 aa). Residues 1037–1052 form the WH2 domain; it reads DDLLADIKKGFQLRKT. A disordered region spans residues 1064–1085; the sequence is KTLSSETNRTDIQHVGKRPEVP. The span at 1071–1083 shows a compositional bias: basic and acidic residues; sequence NRTDIQHVGKRPE.

The protein belongs to the formin homology family.

The chain is Inverted formin-2 (inf2) from Xenopus laevis (African clawed frog).